The following is a 336-amino-acid chain: Glyceraldehyde-3-phosphate dehydrogenase 1 (336 aa).

NAD(+) is bound by residues 12–13, aspartate 34, and arginine 79; that span reads RI. Residues 149 to 151, threonine 180, 209 to 210, and arginine 232 each bind D-glyceraldehyde 3-phosphate; these read SCT and TG. The active-site Nucleophile is cysteine 150. Asparagine 314 is an NAD(+) binding site.

It belongs to the glyceraldehyde-3-phosphate dehydrogenase family. As to quaternary structure, homotetramer.

It localises to the cytoplasm. It catalyses the reaction D-glyceraldehyde 3-phosphate + phosphate + NAD(+) = (2R)-3-phospho-glyceroyl phosphate + NADH + H(+). The protein operates within carbohydrate degradation; glycolysis; pyruvate from D-glyceraldehyde 3-phosphate: step 1/5. With respect to regulation, inhibited by koningic acid through the interaction of cysteine residues with koningic acid even at very low concentrations. The polypeptide is Glyceraldehyde-3-phosphate dehydrogenase 1 (gpd1) (Trichoderma koningii (Hypocrea koningii)).